The primary structure comprises 264 residues: Putative hydroxypyruvate isomerase (264 aa).

Active-site proton donor/acceptor residues include glutamate 145 and glutamate 243.

Belongs to the hyi family.

It catalyses the reaction 3-hydroxypyruvate = 2-hydroxy-3-oxopropanoate. Functionally, catalyzes the reversible isomerization between hydroxypyruvate and 2-hydroxy-3-oxopropanoate (also termed tartronate semialdehyde). This Drosophila melanogaster (Fruit fly) protein is Putative hydroxypyruvate isomerase (Gip).